Here is a 189-residue protein sequence, read N- to C-terminus: uncharacterized protein (189 aa).

The next 4 membrane-spanning stretches (helical) occupy residues 20 to 40 (FILG…YLTF), 46 to 66 (TIII…IILI), 100 to 120 (VLLF…SLNI), and 126 to 146 (FVLY…GDVI).

The protein to M.jannaschii MJ0795.1 and MJ1249.1.

It is found in the cell membrane. This is an uncharacterized protein from Methanocaldococcus jannaschii (strain ATCC 43067 / DSM 2661 / JAL-1 / JCM 10045 / NBRC 100440) (Methanococcus jannaschii).